Reading from the N-terminus, the 378-residue chain is Histidinol-phosphate aminotransferase 2 (378 aa).

Lysine 240 carries the post-translational modification N6-(pyridoxal phosphate)lysine.

Belongs to the class-II pyridoxal-phosphate-dependent aminotransferase family. Histidinol-phosphate aminotransferase subfamily. Homodimer. Pyridoxal 5'-phosphate serves as cofactor.

It catalyses the reaction L-histidinol phosphate + 2-oxoglutarate = 3-(imidazol-4-yl)-2-oxopropyl phosphate + L-glutamate. The protein operates within amino-acid biosynthesis; L-histidine biosynthesis; L-histidine from 5-phospho-alpha-D-ribose 1-diphosphate: step 7/9. In Caulobacter vibrioides (strain ATCC 19089 / CIP 103742 / CB 15) (Caulobacter crescentus), this protein is Histidinol-phosphate aminotransferase 2 (hisC2).